A 310-amino-acid chain; its full sequence is Ninja-family protein 3 (310 aa).

Disordered stretches follow at residues 1-29, 68-140, and 156-215; these read MASR…GEPD, SLPG…DDAQ, and DQGN…EQPP. Basic and acidic residues predominate over residues 99 to 108; sequence ERWRRREMQS. Polar residues-rich tracts occupy residues 156–166 and 176–193; these read DQGNASSSMPE and KSTS…QNKS.

Belongs to the Ninja family.

It localises to the nucleus. This Triticum aestivum (Wheat) protein is Ninja-family protein 3 (AFP-D1).